The chain runs to 347 residues: (RS)-norcoclaurine 6-O-methyltransferase (347 aa).

S-adenosyl-L-methionine is bound by residues glycine 192, aspartate 215, aspartate 235, methionine 236, and lysine 249. The active-site Proton acceptor is histidine 253.

It belongs to the class I-like SAM-binding methyltransferase superfamily. Cation-independent O-methyltransferase family. COMT subfamily. As to quaternary structure, homodimer.

The catalysed reaction is norcoclaurine + S-adenosyl-L-methionine = coclaurine + S-adenosyl-L-homocysteine + H(+). It functions in the pathway alkaloid biosynthesis; (S)-reticuline biosynthesis; (S)-reticuline from (S)-norcoclaurine: step 1/4. Functionally, catalyzes the transfer of the S-methyl group of S-adenosyl-L-methionine (AdoMet) to the 6-hydroxyl group of norcoclaurine to form coclaurine. This is (RS)-norcoclaurine 6-O-methyltransferase from Coptis japonica (Japanese goldthread).